Here is a 369-residue protein sequence, read N- to C-terminus: MAIGYVWNTLYGWVDTGTGSLAAANLTARMQPISHHLAHPDTKRRFHELVCASGQIEHLTPIAAVAATDADILRAHSAAHLENMKRVSNLPTGGDTGDGITMMGNGGLEIARLSAGGAVELTRRVATGELSAGYALVNPPGHHAPHNAAMGFCIFNNTSVAAGYARAVLGMERVAILDWDVHHGNGTQDIWWNDPSVLTISLHQHLCFPPDSGYSTERGAGNGHGYNINVPLPPGSGNAAYLHAMDQVVLHALRAYRPQLIIVGSGFDASMLDPLARMMVTADGFRQMARRTIDCAADICDGRIVFVQEGGYSPHYLPFCGLAVIEELTGVRSLPDPYHEFLAGMGGNTLLDAERAAIEEIVPLLADIR.

Residue histidine 143 is the Proton donor/acceptor of the active site. Residues aspartate 180, histidine 182, and aspartate 268 each coordinate Zn(2+).

The protein belongs to the histone deacetylase family. As to quaternary structure, homotetramer; dimer of dimers. It depends on Zn(2+) as a cofactor.

Zinc, and cobalt and nickel at a lesser extent, are able to increase the catalytic activity (2.2-, 1.3- and 1.1-fold respectively) at concentrations of 1 mM. Higher concentrations have an inhibitory effect. Magnesium, manganese and calcium have no effect on activity at concentrations between 0 and 10 mM. At 100 mM, the catalytic activity is increased between 1.2- and 2.1-fold. Hydroxamates like TSA and SAHA inhibit the enzyme. Is also inhibited by azobenzenes, stilbenes and arylazopyrazoles. Its function is as follows. Exhibits significant levels of protein deacetylase activity comparable to those of eukaryotic HDACs in assays both with fluorogenic peptidic substrates and acetate-radiolabeled histones. Accepts proteins with epsilon-acetylated lysine residues and tritiated-acetate-prelabeled chicken histones as substrates. The natural substrate protein is not yet known. The sequence is that of Histone deacetylase-like amidohydrolase (hdaH) from Alcaligenes sp. (strain DSM 11172) (Bordetella sp. (strain FB188)).